The primary structure comprises 544 residues: Methionine--tRNA ligase (544 aa).

A 'HIGH' region motif is present at residues P10–H20. Residues C141, C144, C153, and C156 each contribute to the Zn(2+) site. The 'KMSKS' region motif lies at K329–S333. An ATP-binding site is contributed by T332.

This sequence belongs to the class-I aminoacyl-tRNA synthetase family. MetG type 1 subfamily. Monomer. Zn(2+) serves as cofactor.

The protein localises to the cytoplasm. It catalyses the reaction tRNA(Met) + L-methionine + ATP = L-methionyl-tRNA(Met) + AMP + diphosphate. In terms of biological role, is required not only for elongation of protein synthesis but also for the initiation of all mRNA translation through initiator tRNA(fMet) aminoacylation. This is Methionine--tRNA ligase from Bacillus cereus (strain G9842).